The sequence spans 285 residues: Acetyl-coenzyme A carboxylase carboxyl transferase subunit beta (285 aa).

The CoA carboxyltransferase N-terminal domain maps to 29–285 (IMTKCPKCKK…ILKIHQEVTK (257 aa)). Zn(2+) contacts are provided by Cys33, Cys36, Cys52, and Cys55. The C4-type zinc-finger motif lies at 33-55 (CPKCKKIMYTKELAENLNVCFNC).

The protein belongs to the AccD/PCCB family. Acetyl-CoA carboxylase is a heterohexamer composed of biotin carboxyl carrier protein (AccB), biotin carboxylase (AccC) and two subunits each of ACCase subunit alpha (AccA) and ACCase subunit beta (AccD). Requires Zn(2+) as cofactor.

Its subcellular location is the cytoplasm. The catalysed reaction is N(6)-carboxybiotinyl-L-lysyl-[protein] + acetyl-CoA = N(6)-biotinyl-L-lysyl-[protein] + malonyl-CoA. The protein operates within lipid metabolism; malonyl-CoA biosynthesis; malonyl-CoA from acetyl-CoA: step 1/1. In terms of biological role, component of the acetyl coenzyme A carboxylase (ACC) complex. Biotin carboxylase (BC) catalyzes the carboxylation of biotin on its carrier protein (BCCP) and then the CO(2) group is transferred by the transcarboxylase to acetyl-CoA to form malonyl-CoA. This chain is Acetyl-coenzyme A carboxylase carboxyl transferase subunit beta, found in Staphylococcus aureus (strain MSSA476).